Consider the following 353-residue polypeptide: MSEPLKPRIDFAEPLKEESTSAFKAQQTFSEAESRTFAPAAIDERPEDEGAAEAAVDAALRPKRSLWRKMVMGGLALFGASVVGQGVQWTMNAWQTQDWVALGGCAAGALIIGAGVGSVVTEWRRLWRLRQRAHERDEARELLHSHSVGKGRAFCEKLAQQAGIDQSHPALQRWYAAIHETQNDREIVGLYANLVQPVLDAQARREISRFAAESTLMIAVSPLALVDMAFIAWRNLRLINRIATLYGIELGYYSRLRLFRLVLLNIAFAGASELVREVGMDWMSQDLAARLSTRAAQGIGAGLLTARLGIKAMELCRPLPWIDNDKPRLGDFRRQLIGQLKETLQKSKSSPEK.

The tract at residues 16–35 is disordered; the sequence is KEESTSAFKAQQTFSEAESR. The segment covering 20–31 has biased composition (polar residues); it reads TSAFKAQQTFSE. 3 consecutive transmembrane segments (helical) span residues 70-90, 100-120, and 213-233; these read MVMG…VQWT, VALG…GSVV, and ESTL…FIAW.

The protein belongs to the UPF0283 family.

The protein resides in the cell inner membrane. The protein is UPF0283 membrane protein YcjF of Salmonella heidelberg (strain SL476).